A 204-amino-acid polypeptide reads, in one-letter code: Imidazoleglycerol-phosphate dehydratase (204 aa).

The protein belongs to the imidazoleglycerol-phosphate dehydratase family.

The protein resides in the cytoplasm. The enzyme catalyses D-erythro-1-(imidazol-4-yl)glycerol 3-phosphate = 3-(imidazol-4-yl)-2-oxopropyl phosphate + H2O. It participates in amino-acid biosynthesis; L-histidine biosynthesis; L-histidine from 5-phospho-alpha-D-ribose 1-diphosphate: step 6/9. The chain is Imidazoleglycerol-phosphate dehydratase from Rhodococcus jostii (strain RHA1).